The primary structure comprises 675 residues: Vitamin K-dependent protein S (675 aa).

An N-terminal signal peptide occupies residues methionine 1–alanine 24. A propeptide spanning residues asparagine 25–arginine 41 is cleaved from the precursor. A Gla domain is found at alanine 42–glycine 87. Glutamate 47, glutamate 48, glutamate 55, glutamate 57, glutamate 60, glutamate 61, glutamate 66, glutamate 67, glutamate 70, glutamate 73, and glutamate 77 each carry 4-carboxyglutamate. The cysteines at positions 58 and 63 are disulfide-linked. 16 disulfides stabilise this stretch: cysteine 88–cysteine 113, cysteine 121–cysteine 134, cysteine 126–cysteine 143, cysteine 145–cysteine 154, cysteine 161–cysteine 175, cysteine 171–cysteine 184, cysteine 186–cysteine 199, cysteine 205–cysteine 217, cysteine 212–cysteine 226, cysteine 228–cysteine 241, cysteine 247–cysteine 256, cysteine 252–cysteine 265, cysteine 267–cysteine 282, cysteine 288–cysteine 567, cysteine 449–cysteine 475, and cysteine 638–cysteine 665. The thrombin-sensitive stretch occupies residues cysteine 88–alanine 116. An EGF-like 1 domain is found at isoleucine 117–glutamate 155. A (3R)-3-hydroxyaspartate modification is found at aspartate 136. Residues aspartate 157–lysine 200 form the EGF-like 2; calcium-binding domain. Asparagine 177 is modified ((3R)-3-hydroxyasparagine). The EGF-like 3; calcium-binding domain maps to aspartate 201 to aspartate 242. Asparagine 219 is subject to (3R)-3-hydroxyasparagine. An EGF-like 4; calcium-binding domain is found at aspartate 243–glutamate 283. Asparagine 258 carries the post-translational modification (3R)-3-hydroxyasparagine. Laminin G-like domains are found at residues leucine 299–cysteine 475 and tyrosine 484–cysteine 665. 2 N-linked (GlcNAc...) asparagine glycosylation sites follow: asparagine 499 and asparagine 509.

The iron and 2-oxoglutarate dependent 3-hydroxylation of aspartate and asparagine is (R) stereospecific within EGF domains. In terms of tissue distribution, plasma.

The protein resides in the secreted. Anticoagulant plasma protein; it is a cofactor to activated protein C in the degradation of coagulation factors Va and VIIIa. It helps to prevent coagulation and stimulating fibrinolysis. This is Vitamin K-dependent protein S (PROS1) from Bos taurus (Bovine).